The sequence spans 550 residues: Eukaryotic translation initiation factor 3 subunit L (550 aa).

Residues 1 to 20 (MVRDSFDGGHTGDPERDLAY) form a disordered region. A PCI domain is found at 309–503 (EATKIFVNCL…IDDSTTDLDF (195 aa)).

It belongs to the eIF-3 subunit L family. Component of the eukaryotic translation initiation factor 3 (eIF-3) complex.

Its subcellular location is the cytoplasm. Its function is as follows. Component of the eukaryotic translation initiation factor 3 (eIF-3) complex, which is involved in protein synthesis of a specialized repertoire of mRNAs and, together with other initiation factors, stimulates binding of mRNA and methionyl-tRNAi to the 40S ribosome. The eIF-3 complex specifically targets and initiates translation of a subset of mRNAs involved in cell proliferation. The polypeptide is Eukaryotic translation initiation factor 3 subunit L (Brugia malayi (Filarial nematode worm)).